The chain runs to 257 residues: Cytochrome b561 domain-containing protein At2g30890 (257 aa).

An N-terminal signal peptide occupies residues 1-21 (MEIHHQLLVSLLFLLLPLCSS). Residues 22–219 (QENTRSLAID…LFQDKWSYIQ (198 aa)) form the Cytochrome b561 domain. The next 5 helical transmembrane spans lie at 55 to 75 (VHGF…IISI), 91 to 111 (LFFL…IGAV), 125 to 145 (HQQL…LGFL), 157 to 177 (WFVG…INIY), and 191 to 211 (ANLW…VYLF). Heme b contacts are provided by H56, H95, H125, and H161. The disordered stretch occupies residues 235-257 (NISTAETGHGYEVEESKPELEKC). Residues 243–257 (HGYEVEESKPELEKC) are compositionally biased toward basic and acidic residues.

Requires heme b as cofactor.

It is found in the membrane. The polypeptide is Cytochrome b561 domain-containing protein At2g30890 (Arabidopsis thaliana (Mouse-ear cress)).